We begin with the raw amino-acid sequence, 510 residues long: NAD(P)H-quinone oxidoreductase subunit 2 B, chloroplastic (510 aa).

The next 13 helical transmembrane spans lie at 24-44, 57-77, 99-119, 124-144, 149-169, 183-203, 227-247, 295-315, 323-343, 354-374, 395-415, 418-438, and 484-504; these read LLLF…GLIL, IPWL…ALLF, IFQF…VEYI, MAIT…MFLC, LITI…LSGY, YLLM…WLYG, PGIS…LSLA, WHLL…LIAI, MLAY…IVGD, YMLF…LFGL, ALSL…AGFF, LHLF…IGLL, and MIVC…IIAI.

The protein belongs to the complex I subunit 2 family. NDH is composed of at least 16 different subunits, 5 of which are encoded in the nucleus.

The protein localises to the plastid. The protein resides in the chloroplast thylakoid membrane. It catalyses the reaction a plastoquinone + NADH + (n+1) H(+)(in) = a plastoquinol + NAD(+) + n H(+)(out). The enzyme catalyses a plastoquinone + NADPH + (n+1) H(+)(in) = a plastoquinol + NADP(+) + n H(+)(out). In terms of biological role, NDH shuttles electrons from NAD(P)H:plastoquinone, via FMN and iron-sulfur (Fe-S) centers, to quinones in the photosynthetic chain and possibly in a chloroplast respiratory chain. The immediate electron acceptor for the enzyme in this species is believed to be plastoquinone. Couples the redox reaction to proton translocation, and thus conserves the redox energy in a proton gradient. This chain is NAD(P)H-quinone oxidoreductase subunit 2 B, chloroplastic, found in Citrus sinensis (Sweet orange).